A 1009-amino-acid chain; its full sequence is Mediator of RNA polymerase II transcription subunit 5 (1009 aa).

Belongs to the Mediator complex subunit 5 family. In terms of assembly, component of the Mediator complex.

It localises to the nucleus. Functionally, component of the Mediator complex, a coactivator involved in the regulated transcription of nearly all RNA polymerase II-dependent genes. Mediator functions as a bridge to convey information from gene-specific regulatory proteins to the basal RNA polymerase II transcription machinery. Mediator is recruited to promoters by direct interactions with regulatory proteins and serves as a scaffold for the assembly of a functional preinitiation complex with RNA polymerase II and the general transcription factors. This is Mediator of RNA polymerase II transcription subunit 5 (nut1) from Neosartorya fischeri (strain ATCC 1020 / DSM 3700 / CBS 544.65 / FGSC A1164 / JCM 1740 / NRRL 181 / WB 181) (Aspergillus fischerianus).